Here is a 97-residue protein sequence, read N- to C-terminus: MSQISSDDVRKVAQLARLDLPEDKIATYTGQLESILEYVGQLQQVDTEGVPETTRAVEVTNVTRVDGVQPTAVREDILDQAPQREGDFFRVPKILAD.

Belongs to the GatC family. Heterotrimer of A, B and C subunits.

It carries out the reaction L-glutamyl-tRNA(Gln) + L-glutamine + ATP + H2O = L-glutaminyl-tRNA(Gln) + L-glutamate + ADP + phosphate + H(+). The catalysed reaction is L-aspartyl-tRNA(Asn) + L-glutamine + ATP + H2O = L-asparaginyl-tRNA(Asn) + L-glutamate + ADP + phosphate + 2 H(+). Its function is as follows. Allows the formation of correctly charged Asn-tRNA(Asn) or Gln-tRNA(Gln) through the transamidation of misacylated Asp-tRNA(Asn) or Glu-tRNA(Gln) in organisms which lack either or both of asparaginyl-tRNA or glutaminyl-tRNA synthetases. The reaction takes place in the presence of glutamine and ATP through an activated phospho-Asp-tRNA(Asn) or phospho-Glu-tRNA(Gln). The chain is Aspartyl/glutamyl-tRNA(Asn/Gln) amidotransferase subunit C from Synechococcus sp. (strain CC9605).